Consider the following 387-residue polypeptide: DNA double-strand break repair protein Mre11 (387 aa).

Asp-11, His-13, Asp-52, and Asp-87 together coordinate Mn(2+). His-88 serves as the catalytic Proton donor. Positions 159, 190, and 192 each coordinate Mn(2+).

Belongs to the MRE11/RAD32 family. Homodimer. Forms a heterotetramer composed of two Mre11 subunits and two Rad50 subunits. Interacts with HerA. The cofactor is Mn(2+).

With respect to regulation, nuclease activity is regulated by Rad50. In terms of biological role, part of the Rad50/Mre11 complex, which is involved in the early steps of DNA double-strand break (DSB) repair. The complex may facilitate opening of the processed DNA ends to aid in the recruitment of HerA and NurA. Mre11 binds to DSB ends and has both double-stranded 3'-5' exonuclease activity and single-stranded endonuclease activity. This chain is DNA double-strand break repair protein Mre11, found in Sulfurisphaera tokodaii (strain DSM 16993 / JCM 10545 / NBRC 100140 / 7) (Sulfolobus tokodaii).